We begin with the raw amino-acid sequence, 347 residues long: Major capsid protein (347 aa).

This sequence belongs to the baculoviridae major capsid protein family.

The protein resides in the virion. Most abundant structural protein of the nucleocapsid produced during the infection cycle. The monomers are arranged in stacked rings around the nucleoprotein core. The protein is Major capsid protein (P39) of Autographa californica nuclear polyhedrosis virus (AcMNPV).